The chain runs to 185 residues: ATP synthase subunit b 2 (185 aa).

The interval 1–23 is disordered; sequence MAEGHGDAKGATAHTAADGGHKA. A compositionally biased stretch (low complexity) spans 9-18; it reads KGATAHTAAD. A helical membrane pass occupies residues 37 to 57; it reads LVSLTIAFVALYLIVSKIILP.

This sequence belongs to the ATPase B chain family. In terms of assembly, F-type ATPases have 2 components, F(1) - the catalytic core - and F(0) - the membrane proton channel. F(1) has five subunits: alpha(3), beta(3), gamma(1), delta(1), epsilon(1). F(0) has three main subunits: a(1), b(2) and c(10-14). The alpha and beta chains form an alternating ring which encloses part of the gamma chain. F(1) is attached to F(0) by a central stalk formed by the gamma and epsilon chains, while a peripheral stalk is formed by the delta and b chains.

The protein resides in the cell inner membrane. In terms of biological role, f(1)F(0) ATP synthase produces ATP from ADP in the presence of a proton or sodium gradient. F-type ATPases consist of two structural domains, F(1) containing the extramembraneous catalytic core and F(0) containing the membrane proton channel, linked together by a central stalk and a peripheral stalk. During catalysis, ATP synthesis in the catalytic domain of F(1) is coupled via a rotary mechanism of the central stalk subunits to proton translocation. Its function is as follows. Component of the F(0) channel, it forms part of the peripheral stalk, linking F(1) to F(0). The b'-subunit is a diverged and duplicated form of b found in plants and photosynthetic bacteria. The protein is ATP synthase subunit b 2 (atpF2) of Rhodopseudomonas palustris (strain BisB5).